Consider the following 644-residue polypeptide: Exoribonuclease 2 (644 aa).

The region spanning 189-516 is the RNB domain; it reads REDLTALDFV…NHRLLKAVIK (328 aa). Residues 561–643 enclose the S1 motif domain; the sequence is DTRFAAEIVD…ETRSIIARPV (83 aa).

It belongs to the RNR ribonuclease family. RNase II subfamily.

Its subcellular location is the cytoplasm. The catalysed reaction is Exonucleolytic cleavage in the 3'- to 5'-direction to yield nucleoside 5'-phosphates.. In terms of biological role, involved in mRNA degradation. Hydrolyzes single-stranded polyribonucleotides processively in the 3' to 5' direction. The protein is Exoribonuclease 2 of Shigella dysenteriae serotype 1 (strain Sd197).